A 76-amino-acid chain; its full sequence is Sec-independent protein translocase protein TatA (76 aa).

Residues 1 to 21 (MGGLSIWHWLIVLLIVALVFG) form a helical membrane-spanning segment. A disordered region spans residues 43–76 (MKEGEAPADAQQLPRSGSVDVNAKETTRSDSNKA). Over residues 64 to 76 (NAKETTRSDSNKA) the composition is skewed to basic and acidic residues.

It belongs to the TatA/E family. As to quaternary structure, the Tat system comprises two distinct complexes: a TatABC complex, containing multiple copies of TatA, TatB and TatC subunits, and a separate TatA complex, containing only TatA subunits. Substrates initially bind to the TatABC complex, which probably triggers association of the separate TatA complex to form the active translocon.

The protein resides in the cell inner membrane. Part of the twin-arginine translocation (Tat) system that transports large folded proteins containing a characteristic twin-arginine motif in their signal peptide across membranes. TatA could form the protein-conducting channel of the Tat system. The sequence is that of Sec-independent protein translocase protein TatA from Burkholderia lata (strain ATCC 17760 / DSM 23089 / LMG 22485 / NCIMB 9086 / R18194 / 383).